Here is a 118-residue protein sequence, read N- to C-terminus: Large ribosomal subunit protein bL19 (118 aa).

Belongs to the bacterial ribosomal protein bL19 family.

Functionally, this protein is located at the 30S-50S ribosomal subunit interface and may play a role in the structure and function of the aminoacyl-tRNA binding site. The sequence is that of Large ribosomal subunit protein bL19 from Salinibacter ruber (strain DSM 13855 / M31).